Here is a 561-residue protein sequence, read N- to C-terminus: Dihydroxy-acid dehydratase (561 aa).

A [2Fe-2S] cluster-binding site is contributed by C50. D82 is a binding site for Mg(2+). C123 provides a ligand contact to [2Fe-2S] cluster. Mg(2+) contacts are provided by D124 and K125. N6-carboxylysine is present on K125. C195 contributes to the [2Fe-2S] cluster binding site. E447 contacts Mg(2+). The active-site Proton acceptor is S473.

Belongs to the IlvD/Edd family. As to quaternary structure, homodimer. [2Fe-2S] cluster serves as cofactor. Mg(2+) is required as a cofactor.

The enzyme catalyses (2R)-2,3-dihydroxy-3-methylbutanoate = 3-methyl-2-oxobutanoate + H2O. It carries out the reaction (2R,3R)-2,3-dihydroxy-3-methylpentanoate = (S)-3-methyl-2-oxopentanoate + H2O. It participates in amino-acid biosynthesis; L-isoleucine biosynthesis; L-isoleucine from 2-oxobutanoate: step 3/4. It functions in the pathway amino-acid biosynthesis; L-valine biosynthesis; L-valine from pyruvate: step 3/4. Its function is as follows. Functions in the biosynthesis of branched-chain amino acids. Catalyzes the dehydration of (2R,3R)-2,3-dihydroxy-3-methylpentanoate (2,3-dihydroxy-3-methylvalerate) into 2-oxo-3-methylpentanoate (2-oxo-3-methylvalerate) and of (2R)-2,3-dihydroxy-3-methylbutanoate (2,3-dihydroxyisovalerate) into 2-oxo-3-methylbutanoate (2-oxoisovalerate), the penultimate precursor to L-isoleucine and L-valine, respectively. The polypeptide is Dihydroxy-acid dehydratase (Synechocystis sp. (strain ATCC 27184 / PCC 6803 / Kazusa)).